The primary structure comprises 365 residues: tRNA-specific 2-thiouridylase MnmA (365 aa).

ATP is bound by residues 14-21 and L40; that span reads AMSGGVDS. Catalysis depends on C108, which acts as the Nucleophile. C108 and C204 are disulfide-bonded. G132 contributes to the ATP binding site. The interaction with tRNA stretch occupies residues 154–156; the sequence is KDQ. C204 acts as the Cysteine persulfide intermediate in catalysis.

The protein belongs to the MnmA/TRMU family.

Its subcellular location is the cytoplasm. The catalysed reaction is S-sulfanyl-L-cysteinyl-[protein] + uridine(34) in tRNA + AH2 + ATP = 2-thiouridine(34) in tRNA + L-cysteinyl-[protein] + A + AMP + diphosphate + H(+). In terms of biological role, catalyzes the 2-thiolation of uridine at the wobble position (U34) of tRNA, leading to the formation of s(2)U34. The protein is tRNA-specific 2-thiouridylase MnmA of Rickettsia peacockii (strain Rustic).